The sequence spans 60 residues: Large ribosomal subunit protein bL32 (60 aa).

The tract at residues methionine 1–lysine 21 is disordered. Over residues histidine 7–tyrosine 20 the composition is skewed to basic residues.

The protein belongs to the bacterial ribosomal protein bL32 family.

This is Large ribosomal subunit protein bL32 from Streptococcus thermophilus (strain ATCC BAA-250 / LMG 18311).